The following is a 121-amino-acid chain: MRPTVILTCAAAAHAQIFGNFFNQMLKKEFAVEESWHNQEYHKVSCDNGHVCPDTLTCVNSPLECPCQFPASEIKCVYPDKSGYVCISKPGDGYDGSDASSKAEDGKRDCAWVNKAFRGEL.

The signal sequence occupies residues 1-15 (MRPTVILTCAAAAHA).

This sequence belongs to the LCL2 family.

In terms of biological role, probable component of the endoplasmic reticulum-associated degradation (ERAD) pathway. This chain is Long chronological lifespan protein 2 (LCL2), found in Yarrowia lipolytica (strain CLIB 122 / E 150) (Yeast).